Here is a 279-residue protein sequence, read N- to C-terminus: Pantothenate synthetase (279 aa).

Residue 31–38 coordinates ATP; sequence MGALHEGH. The Proton donor role is filled by histidine 38. Glutamine 62 is a (R)-pantoate binding site. Glutamine 62 contacts beta-alanine. 148-151 is a binding site for ATP; the sequence is GEKD. A (R)-pantoate-binding site is contributed by glutamine 154. Residues valine 177 and 185 to 188 contribute to the ATP site; that span reads LSSR.

This sequence belongs to the pantothenate synthetase family. In terms of assembly, homodimer.

The protein resides in the cytoplasm. It catalyses the reaction (R)-pantoate + beta-alanine + ATP = (R)-pantothenate + AMP + diphosphate + H(+). It participates in cofactor biosynthesis; (R)-pantothenate biosynthesis; (R)-pantothenate from (R)-pantoate and beta-alanine: step 1/1. In terms of biological role, catalyzes the condensation of pantoate with beta-alanine in an ATP-dependent reaction via a pantoyl-adenylate intermediate. The sequence is that of Pantothenate synthetase from Cereibacter sphaeroides (strain ATCC 17029 / ATH 2.4.9) (Rhodobacter sphaeroides).